Consider the following 332-residue polypeptide: 30 kDa heat shock protein (332 aa).

Residues 1–34 lie on the Extracellular side of the membrane; sequence MNDTLSSFLNRNEALGLNPPHGLDMHITKRGSDW. Residues 35 to 55 form a helical membrane-spanning segment; the sequence is LWAVFAVFGFILLCYVVMFFI. Residues 56–65 lie on the Cytoplasmic side of the membrane; sequence AENKGSRLTR. A helical membrane pass occupies residues 66-86; that stretch reads YALAPAFLITFFEFFAFFTYA. At 87 to 121 the chain is on the extracellular side; that stretch reads SDLGWTGVQAEFNHVKVSKSITGEVPGIRQIFYSK. A helical transmembrane segment spans residues 122–142; sequence YIAWFLSWPCLLFLIELAAST. Residues 143–157 are Cytoplasmic-facing; the sequence is TGENDDISALDMVHS. Residues 158 to 178 traverse the membrane as a helical segment; the sequence is LLIQIVGTLFWVVSLLVGSLI. Topologically, residues 179–181 are extracellular; the sequence is KST. Residues 182–202 form a helical membrane-spanning segment; that stretch reads YKWGYYTIGAVAMLVTQGVIC. The Cytoplasmic segment spans residues 203-215; that stretch reads QRQFFNLKTRGFN. Residues 216–236 form a helical membrane-spanning segment; sequence ALMLCTCMVIVWLYFICWGLS. At 237 to 248 the chain is on the extracellular side; that stretch reads DGGNRIQPDGEA. The helical transmembrane segment at 249-269 threads the bilayer; sequence IFYGVLDLCVFAIYPCYLLIA. The Cytoplasmic segment spans residues 270–332; that stretch reads VSRDGKLPRL…EAEQAVEDTA (63 aa). Positions 290–332 are disordered; sequence ATDDVEDAAPETKEAVPESPRASGETAIHEPEPEAEQAVEDTA. The residue at position 308 (Ser-308) is a Phosphoserine. Over residues 322–332 the composition is skewed to acidic residues; it reads PEAEQAVEDTA. Position 331 is a phosphothreonine (Thr-331).

It belongs to the archaeal/bacterial/fungal opsin family.

It is found in the membrane. Probably cooperates with other heat shock proteins in the translocation of polypeptides through membranes. It may counteract the altering effect of heat shock on the plasma membrane. This Saccharomyces cerevisiae (strain ATCC 204508 / S288c) (Baker's yeast) protein is 30 kDa heat shock protein (HSP30).